We begin with the raw amino-acid sequence, 417 residues long: Lipoyl synthase, mitochondrial (417 aa).

The N-terminal 30 residues, 1–30, are a transit peptide targeting the mitochondrion; it reads MATSIPRSRCFLTSSTLKVVPRSRTPLRSF. The disordered stretch occupies residues 23–62; it reads SRTPLRSFATTSDTPQTSVPEAPGKRSRPPTSFSDTLNAG. Polar residues-rich tracts occupy residues 30-41 and 51-61; these read FATTSDTPQTSV and PPTSFSDTLNA. 7 residues coordinate [4Fe-4S] cluster: cysteine 132, cysteine 137, cysteine 143, cysteine 163, cysteine 167, cysteine 170, and serine 378. In terms of domain architecture, Radical SAM core spans 146–367; the sequence is GSSKSAATAT…RQRALDMGFL (222 aa).

It belongs to the radical SAM superfamily. Lipoyl synthase family. Requires [4Fe-4S] cluster as cofactor.

It is found in the mitochondrion. The catalysed reaction is [[Fe-S] cluster scaffold protein carrying a second [4Fe-4S](2+) cluster] + N(6)-octanoyl-L-lysyl-[protein] + 2 oxidized [2Fe-2S]-[ferredoxin] + 2 S-adenosyl-L-methionine + 4 H(+) = [[Fe-S] cluster scaffold protein] + N(6)-[(R)-dihydrolipoyl]-L-lysyl-[protein] + 4 Fe(3+) + 2 hydrogen sulfide + 2 5'-deoxyadenosine + 2 L-methionine + 2 reduced [2Fe-2S]-[ferredoxin]. The protein operates within protein modification; protein lipoylation via endogenous pathway; protein N(6)-(lipoyl)lysine from octanoyl-[acyl-carrier-protein]: step 2/2. Its function is as follows. Catalyzes the radical-mediated insertion of two sulfur atoms into the C-6 and C-8 positions of the octanoyl moiety bound to the lipoyl domains of lipoate-dependent enzymes, thereby converting the octanoylated domains into lipoylated derivatives. This Pyrenophora tritici-repentis (strain Pt-1C-BFP) (Wheat tan spot fungus) protein is Lipoyl synthase, mitochondrial.